The primary structure comprises 264 residues: Major prion protein (264 aa).

The signal sequence occupies residues 1–24 (MVKSHIGSWILVLFVAMWSDVGLC). An interaction with GRB2, ERI3 and SYN1 region spans residues 25-241 (KKRPKPGGGW…ESEAYYQRGA (217 aa)). The segment at 28-118 (PKPGGGWNTG…QWNKPSKPKT (91 aa)) is disordered. 6 repeat units span residues 54–62 (SQGGGGWGQ), 63–70 (PHGGGWGQ), 71–78 (PHGGGWGQ), 79–86 (PHGGGWGQ), 87–94 (PHGGGWGQ), and 95–103 (PHGGGGWGQ). The tract at residues 54–103 (SQGGGGWGQPHGGGWGQPHGGGWGQPHGGGWGQPHGGGWGQPHGGGGWGQ) is 6 X 8 AA tandem repeats of P-H-G-G-G-W-G-Q. A compositionally biased stretch (gly residues) spans 55-107 (QGGGGWGQPHGGGWGQPHGGGWGQPHGGGWGQPHGGGWGQPHGGGGWGQGGTH). 12 residues coordinate Cu(2+): H72, G73, G74, H80, G81, G82, H88, G89, G90, H96, G98, and G99. Residues C190 and C225 are joined by a disulfide bond. 2 N-linked (GlcNAc...) asparagine glycosylation sites follow: N192 and N208. A241 carries GPI-anchor amidated alanine lipidation. Residues 242–264 (SVILFSSPPVILLISFLIFLIVG) constitute a propeptide, removed in mature form.

This sequence belongs to the prion family. In terms of assembly, monomer and homodimer. Has a tendency to aggregate into amyloid fibrils containing a cross-beta spine, formed by a steric zipper of superposed beta-strands. Soluble oligomers may represent an intermediate stage on the path to fibril formation. Copper binding may promote oligomerization. Interacts with GRB2, APP, ERI3/PRNPIP and SYN1. Mislocalized cytosolically exposed PrP interacts with MGRN1; this interaction alters MGRN1 subcellular location and causes lysosomal enlargement. Interacts with KIAA1191.

It is found in the cell membrane. The protein resides in the golgi apparatus. Its function is as follows. Its primary physiological function is unclear. Has cytoprotective activity against internal or environmental stresses. May play a role in neuronal development and synaptic plasticity. May be required for neuronal myelin sheath maintenance. May play a role in iron uptake and iron homeostasis. Soluble oligomers are toxic to cultured neuroblastoma cells and induce apoptosis (in vitro). Association with GPC1 (via its heparan sulfate chains) targets PRNP to lipid rafts. Also provides Cu(2+) or Zn(2+) for the ascorbate-mediated GPC1 deaminase degradation of its heparan sulfate side chains. This is Major prion protein (PRNP) from Tragelaphus imberbis (Lesser kudu).